We begin with the raw amino-acid sequence, 380 residues long: Apolipoprotein A-IV (380 aa).

The N-terminal stretch at 1 to 20 is a signal peptide; sequence MFLKAVVLSLALVAVTGAEA. 13 consecutive repeat copies span residues 33-54, 60-81, 82-103, 115-136, 137-158, 159-180, 181-202, 203-224, 225-246, 247-268, 269-286, 287-308, and 309-330. Positions 33-330 are 13 X 22 AA approximate tandem repeats; the sequence is DYFSQLGNNA…QLDTLRQKLG (298 aa). Residues 361–380 are disordered; that stretch reads KESQAPALPAQEEMPVPLGG.

Belongs to the apolipoprotein A1/A4/E family. As to quaternary structure, homodimer. As to expression, secreted in plasma.

Its subcellular location is the secreted. Functionally, may have a role in chylomicrons and VLDL secretion and catabolism. Required for efficient activation of lipoprotein lipase by ApoC-II; potent activator of LCAT. Apoa-IV is a major component of HDL and chylomicrons. The polypeptide is Apolipoprotein A-IV (APOA4) (Bos taurus (Bovine)).